The following is a 249-amino-acid chain: uncharacterized protein (249 aa).

This is an uncharacterized protein from Caenorhabditis elegans.